Consider the following 368-residue polypeptide: Agmatine deiminase (368 aa).

The active-site Amidino-cysteine intermediate is the C357.

This sequence belongs to the agmatine deiminase family. Homodimer.

It catalyses the reaction agmatine + H2O = N-carbamoylputrescine + NH4(+). It participates in amine and polyamine biosynthesis; putrescine biosynthesis via agmatine pathway; N-carbamoylputrescine from agmatine: step 1/1. In terms of biological role, mediates the hydrolysis of agmatine into N-carbamoylputrescine in the arginine decarboxylase (ADC) pathway of putrescine biosynthesis, a basic polyamine. This chain is Agmatine deiminase, found in Pseudomonas putida (strain ATCC 700007 / DSM 6899 / JCM 31910 / BCRC 17059 / LMG 24140 / F1).